The following is a 438-amino-acid chain: Coenzyme A disulfide reductase (438 aa).

8-33 (GAVAGGATCASQIRRLDKESDIIIFE) is a binding site for FAD. Residues threonine 15, glutamine 19, arginine 22, serine 39, and asparagine 42 each coordinate substrate. Cysteine 43 (nucleophile) is an active-site residue. The active-site Redox-active is the cysteine 43. Lysine 71 contributes to the substrate binding site. 151–166 (VLVVGAGYVSLEVLEN) contributes to the NADP(+) binding site. 267–277 (TNVPNIYAIGD) is a binding site for FAD. Histidine 299 is a substrate binding site. Tyrosine 419 contributes to the FAD binding site. Lysine 427 is a binding site for substrate.

It belongs to the class-III pyridine nucleotide-disulfide oxidoreductase family. As to quaternary structure, homodimer. FAD serves as cofactor.

The enzyme catalyses NADP(+) + 2 CoA = CoA-disulfide + NADPH + H(+). Functionally, catalyzes specifically the NADPH-dependent reduction of coenzyme A disulfide. The chain is Coenzyme A disulfide reductase from Staphylococcus aureus (strain bovine RF122 / ET3-1).